A 260-amino-acid polypeptide reads, in one-letter code: Salicylic acid-binding protein 2 (260 aa).

Residues alanine 13, serine 81, and lysine 159 each coordinate salicylate. Catalysis depends on serine 81, which acts as the Acyl-ester intermediate. Residues aspartate 210 and histidine 238 each act as charge relay system in the active site. Residues histidine 238, leucine 253, and histidine 257 each coordinate salicylate.

It belongs to the AB hydrolase superfamily. Methylesterase family.

It carries out the reaction methyl salicylate + H2O = salicylate + methanol + H(+). The protein operates within plant hormone biosynthesis. Its activity is regulated as follows. Esterase activity is down-regulated by salicylic acid (SA) or by tetraFA, a synthetic SA analog. In terms of biological role, required to convert methyl salicylate (MeSA) to salicylic acid (SA) as part of the signal transduction pathways that activate systemic acquired resistance in systemic tissue. MeSA is believed to be an inactive form that needs to be demethylated to exert a biological effect. Also able to catalyze the conversion of acibenzolar-S-methyl into acibenzolar to induce systemic acquired resistance. The protein is Salicylic acid-binding protein 2 of Nicotiana tabacum (Common tobacco).